Consider the following 143-residue polypeptide: Large ribosomal subunit protein uL11 (143 aa).

Belongs to the universal ribosomal protein uL11 family. Part of the ribosomal stalk of the 50S ribosomal subunit. Interacts with L10 and the large rRNA to form the base of the stalk. L10 forms an elongated spine to which L12 dimers bind in a sequential fashion forming a multimeric L10(L12)X complex. One or more lysine residues are methylated.

Forms part of the ribosomal stalk which helps the ribosome interact with GTP-bound translation factors. The sequence is that of Large ribosomal subunit protein uL11 from Chromohalobacter salexigens (strain ATCC BAA-138 / DSM 3043 / CIP 106854 / NCIMB 13768 / 1H11).